The chain runs to 312 residues: Protein atonal (312 aa).

2 disordered regions span residues 136–174 (SNVGTCKTIPASAGPKPKRSYTKKNQPSTTATSTPTAAA) and 220–248 (NDGSFDLADGENQDAAAGGSGKKRRGKQI). A compositionally biased stretch (low complexity) spans 162–174 (PSTTATSTPTAAA). A bHLH domain is found at 255-307 (KRRLAANARERRRMQNLNQAFDRLRQYLPCLGNDRQLSKHETLQMAQTYISAL).

In terms of assembly, efficient DNA binding requires dimerization with another bHLH protein. Forms a heterodimer with Daughterless. In terms of tissue distribution, proneural clusters and sense organ precursors of the chordotonal organs, optic furrow of the eye-antennal disk and developing brain lobe.

The protein resides in the nucleus. Developmental protein involved in neurogenesis. Required for the formation of chordotonal organs and photoreceptors. Seems to bind to E boxes. Specifically required for the photoreceptor R8 selection. The protein is Protein atonal (ato) of Drosophila melanogaster (Fruit fly).